The chain runs to 386 residues: DNA replication and repair protein RecF (386 aa).

Residue G30–T37 participates in ATP binding.

Belongs to the RecF family.

It is found in the cytoplasm. The RecF protein is involved in DNA metabolism; it is required for DNA replication and normal SOS inducibility. RecF binds preferentially to single-stranded, linear DNA. It also seems to bind ATP. This chain is DNA replication and repair protein RecF, found in Natranaerobius thermophilus (strain ATCC BAA-1301 / DSM 18059 / JW/NM-WN-LF).